The sequence spans 147 residues: Large ribosomal subunit protein bL9 (147 aa).

The protein belongs to the bacterial ribosomal protein bL9 family.

Functionally, binds to the 23S rRNA. This Halalkalibacterium halodurans (strain ATCC BAA-125 / DSM 18197 / FERM 7344 / JCM 9153 / C-125) (Bacillus halodurans) protein is Large ribosomal subunit protein bL9.